Here is a 432-residue protein sequence, read N- to C-terminus: Keratin, type I cytoskeletal 17 (432 aa).

The tract at residues 1-24 (MTTSIRQFTSSSSIKGSSGLGGGS) is disordered. Positions 1–83 (MTTSIRQFTS…GGVDGLLAGG (83 aa)) are head. Residues S12 and S13 each carry the phosphoserine modification. A Glycyl lysine isopeptide (Lys-Gly) (interchain with G-Cter in SUMO1); alternate cross-link involves residue K15. K15 is covalently cross-linked (Glycyl lysine isopeptide (Lys-Gly) (interchain with G-Cter in SUMO2); alternate). 3 positions are modified to phosphoserine: S25, S32, and S39. The residue at position 44 (S44) is a Phosphoserine; by RPS6KA1. Residues 84–120 (EKATMQNLNDRLASYLDKVRALEEANTELEVKIRDWY) form a coil 1A region. An IF rod domain is found at 84 to 395 (EKATMQNLND…RLLEGEDAHL (312 aa)). The segment at 102–116 (VRALEEANTELEVKI) is peptide epitope S1; induces T-cell and keratinocyte proliferation and IFN-gamma production. T110 is subject to Phosphothreonine. Positions 121-138 (QRQAPGPARDYSQYYRTI) are linker 1. The segment at 139 to 230 (EELQNKILTA…NHEEEMNALR (92 aa)) is coil 1B. The peptide epitope S2; induces T-cell proliferation and IFN-gamma production stretch occupies residues 153 to 167 (ANILLQIDNARLAAD). Residues 231–250 (GQVGGEINVEMDAAPGVDLS) are linker 12. A coil 2 region spans residues 251–392 (RILNEMRDQY…TYRRLLEGED (142 aa)). K278 is covalently cross-linked (Glycyl lysine isopeptide (Lys-Gly) (interchain with G-Cter in SUMO2)). T279 is modified (phosphothreonine). S323 bears the Phosphoserine mark. Positions 332 to 346 (ENRYCVQLSQIQGLI) are peptide epitope S4; induces T-cell and keratinocyte proliferation and IFN-gamma production. Residues 393 to 432 (AHLTQYKKEPVTTRQVRTIVEEVQDGKVISSREQVHQTTR) form a tail region. Residues K399, K400, and K419 each participate in a glycyl lysine isopeptide (Lys-Gly) (interchain with G-Cter in SUMO1); alternate cross-link. Glycyl lysine isopeptide (Lys-Gly) (interchain with G-Cter in SUMO2); alternate cross-links involve residues K399, K400, and K419.

This sequence belongs to the intermediate filament family. Heterodimer of a type I and a type II keratin. KRT17 associates with KRT6 isomers (KRT6A or KRT6B). Interacts with TRADD and SFN. Post-translationally, phosphorylation at Ser-44 occurs in a growth- and stress-dependent fashion in skin keratinocytes, it has no effect on filament organization. As to expression, expressed in the outer root sheath and medulla region of hair follicle specifically from eyebrow and beard, digital pulp, nail matrix and nail bed epithelium, mucosal stratified squamous epithelia and in basal cells of oral epithelium, palmoplantar epidermis and sweat and mammary glands. Also expressed in myoepithelium of prostate, basal layer of urinary bladder, cambial cells of sebaceous gland and in exocervix (at protein level).

It is found in the cytoplasm. Its function is as follows. Type I keratin involved in the formation and maintenance of various skin appendages, specifically in determining shape and orientation of hair. Required for the correct growth of hair follicles, in particular for the persistence of the anagen (growth) state. Modulates the function of TNF-alpha in the specific context of hair cycling. Regulates protein synthesis and epithelial cell growth through binding to the adapter protein SFN and by stimulating Akt/mTOR pathway. Involved in tissue repair. May be a marker of basal cell differentiation in complex epithelia and therefore indicative of a certain type of epithelial 'stem cells'. Acts as a promoter of epithelial proliferation by acting a regulator of immune response in skin: promotes Th1/Th17-dominated immune environment contributing to the development of basaloid skin tumors. May act as an autoantigen in the immunopathogenesis of psoriasis, with certain peptide regions being a major target for autoreactive T-cells and hence causing their proliferation. The protein is Keratin, type I cytoskeletal 17 (KRT17) of Homo sapiens (Human).